A 182-amino-acid chain; its full sequence is Flightin (182 aa).

A compositionally biased stretch (acidic residues) spans 1–15; that stretch reads MADEEDPWGFDDGGE. Residues 1-76 form a disordered region; that stretch reads MADEEDPWGF…PPPPEDDGYR (76 aa).

Post-translationally, several forms of flightin are thought to be produced through post-translational modifications, possibly by phosphorylation. In terms of tissue distribution, found only in indirect flight muscles (IFM).

In terms of biological role, possibly involved in the regulation of flight muscles contraction, possibly by modulating actin-myosin interaction. The chain is Flightin (fln) from Drosophila melanogaster (Fruit fly).